A 304-amino-acid chain; its full sequence is Putative S-adenosyl-L-methionine-dependent methyltransferase Mjls_1071 (304 aa).

Residues D130 and 159–160 (DL) contribute to the S-adenosyl-L-methionine site.

This sequence belongs to the UPF0677 family.

In terms of biological role, exhibits S-adenosyl-L-methionine-dependent methyltransferase activity. This chain is Putative S-adenosyl-L-methionine-dependent methyltransferase Mjls_1071, found in Mycobacterium sp. (strain JLS).